Consider the following 140-residue polypeptide: Small ribosomal subunit protein uS19 (140 aa).

It belongs to the universal ribosomal protein uS19 family.

Protein S19 forms a complex with S13 that binds strongly to the 16S ribosomal RNA. The polypeptide is Small ribosomal subunit protein uS19 (Methanocella arvoryzae (strain DSM 22066 / NBRC 105507 / MRE50)).